The following is a 367-amino-acid chain: Apolipoprotein A-V (367 aa).

The first 20 residues, 1-20, serve as a signal peptide directing secretion; sequence MVAVLTWALALLSAFATAQT. Ser56 is subject to Phosphoserine.

Belongs to the apolipoprotein A1/A4/E family. As to quaternary structure, interacts with GPIHBP1. Interacts with SORL1; this interaction leads to APOA5 internalization and sorting either to lysosomes and degradation, or to the trans-Golgi network. In terms of processing, phosphorylated by FAM20C in the extracellular medium.

The protein localises to the secreted. Its subcellular location is the early endosome. It localises to the late endosome. It is found in the golgi apparatus. The protein resides in the trans-Golgi network. Its function is as follows. Minor apolipoprotein mainly associated with HDL and to a lesser extent with VLDL. May also be associated with chylomicrons. Important determinant of plasma triglyceride (TG) levels by both being a potent stimulator of apo-CII lipoprotein lipase (LPL) TG hydrolysis and an inhibitor of the hepatic VLDL-TG production rate (without affecting the VLDL-apoB production rate). Activates poorly lecithin:cholesterol acyltransferase (LCAT) and does not enhance efflux of cholesterol from macrophages. Binds heparin. This Phoca vitulina (Harbor seal) protein is Apolipoprotein A-V (APOA5).